The chain runs to 141 residues: Lutropin subunit beta (141 aa).

Residues 1 to 20 form the signal peptide; sequence MERLQGLLLWLLLSPSVVWA. 5 disulfide bridges follow: Cys-29-Cys-77, Cys-43-Cys-92, Cys-54-Cys-108, Cys-58-Cys-110, and Cys-113-Cys-120. Asn-33 carries an N-linked (GlcNAc...) asparagine glycan.

Belongs to the glycoprotein hormones subunit beta family. Heterodimer of a common alpha chain and a unique beta chain which confers biological specificity to thyrotropin, lutropin, follitropin and gonadotropin.

Its subcellular location is the secreted. Promotes spermatogenesis and ovulation by stimulating the testes and ovaries to synthesize steroids. This is Lutropin subunit beta (Lhb) from Mus musculus (Mouse).